The primary structure comprises 2485 residues: Probable polyketide synthase 10 (2485 aa).

A Ketosynthase family 3 (KS3) domain is found at 8–447; it reads EDDIAIIGVG…GANCCIILSE (440 aa). Residues Cys-184, His-325, and His-363 each act as for beta-ketoacyl synthase activity in the active site. Positions 636 to 669 are acyl/malonyl transferase; the sequence is GIEASFIVGHSLGEISAAHCSGMIDLETLCYIIY. The For acyl/malonyl transferase activity role is filled by Ser-646. The tract at residues 930-1054 is N-terminal hotdog fold; that stretch reads PPITILGNES…GNFHISNNLF (125 aa). In terms of domain architecture, PKS/mFAS DH spans 930 to 1220; it reads PPITILGNES…SKSLTPIQDP (291 aa). The active-site Proton acceptor; for dehydratase activity is the His-964. Positions 1071–1220 are C-terminal hotdog fold; it reads NYSLIERDDL…SKSLTPIQDP (150 aa). The active-site Proton donor; for dehydratase activity is Asp-1134. Positions 2410–2485 constitute a Carrier domain; that stretch reads ESNKGIDGLL…NQLIKFLNKK (76 aa). Ser-2447 is modified (O-(pantetheine 4'-phosphoryl)serine).

It depends on pantetheine 4'-phosphate as a cofactor.

Probable polyketide synthase. The chain is Probable polyketide synthase 10 (pks10) from Dictyostelium discoideum (Social amoeba).